Reading from the N-terminus, the 334-residue chain is Glycerol-3-phosphate dehydrogenase [NAD(P)+] (334 aa).

Positions 14, 15, 35, and 109 each coordinate NADPH. Positions 109, 138, and 140 each coordinate sn-glycerol 3-phosphate. Residue alanine 142 coordinates NADPH. Sn-glycerol 3-phosphate contacts are provided by lysine 194, aspartate 247, serine 257, arginine 258, and asparagine 259. The Proton acceptor role is filled by lysine 194. Arginine 258 is a binding site for NADPH. The NADPH site is built by valine 282 and glutamate 284.

It belongs to the NAD-dependent glycerol-3-phosphate dehydrogenase family.

It localises to the cytoplasm. The enzyme catalyses sn-glycerol 3-phosphate + NAD(+) = dihydroxyacetone phosphate + NADH + H(+). The catalysed reaction is sn-glycerol 3-phosphate + NADP(+) = dihydroxyacetone phosphate + NADPH + H(+). It functions in the pathway membrane lipid metabolism; glycerophospholipid metabolism. In terms of biological role, catalyzes the reduction of the glycolytic intermediate dihydroxyacetone phosphate (DHAP) to sn-glycerol 3-phosphate (G3P), the key precursor for phospholipid synthesis. The polypeptide is Glycerol-3-phosphate dehydrogenase [NAD(P)+] (Colwellia psychrerythraea (strain 34H / ATCC BAA-681) (Vibrio psychroerythus)).